Reading from the N-terminus, the 415-residue chain is MIKVADLNIPVIEDFDINGRKVLLRIDINSPVDRKTGKLLDDSRIKAHAETIRELLDKQNSVVIISHQGRPGDDDFISLEEHSKILSKYVGREIEFVDDVIGPYAREKISKLGKGEAILLENVRIVSEELIEAPPQQQSKTFLVRKLAPLVDFYINDAFATAHRSQPSLVGFPLVKPSAAGRIMEKEVSALSKIFNKEDSPKIFVLGGSKVSDTLKIIEHLAKNRVADRILTGGLVAELFAVAKGINLGKPNMQVLENKGLLSLIPRARKILLSGAPIEIPVDFTVEKPSGELSNDPENNVSGIIKDIGNTTIEIYSSFIKEGKVITLRGPMGVIEDERFRIGTKSLLKASIESPGYVIIGGGHMISMLDKDVEINPNKIHVSTGGGALLLFLAGDKLPALEALHMSWVMQSGKS.

Substrate contacts are provided by residues 27–29 (DIN), Arg44, 67–70 (HQGR), Arg124, and Arg164. ATP-binding positions include Glu336 and 362–365 (GGHM).

This sequence belongs to the phosphoglycerate kinase family. Monomer.

It localises to the cytoplasm. The enzyme catalyses (2R)-3-phosphoglycerate + ATP = (2R)-3-phospho-glyceroyl phosphate + ADP. Its pathway is carbohydrate degradation; glycolysis; pyruvate from D-glyceraldehyde 3-phosphate: step 2/5. The chain is Phosphoglycerate kinase from Sulfurisphaera tokodaii (strain DSM 16993 / JCM 10545 / NBRC 100140 / 7) (Sulfolobus tokodaii).